Here is a 263-residue protein sequence, read N- to C-terminus: Endonuclease 8 (263 aa).

The active-site Schiff-base intermediate with DNA is the proline 2. Glutamate 3 serves as the catalytic Proton donor. Lysine 53 (proton donor; for beta-elimination activity) is an active-site residue. Glutamine 70, arginine 125, and asparagine 169 together coordinate DNA. The FPG-type zinc-finger motif lies at 229-263; that stretch reads KVFHRDGEACERCGGIIEKTTLSSRPFYWCPHCQK. Residue arginine 253 is the Proton donor; for delta-elimination activity of the active site.

This sequence belongs to the FPG family. Zn(2+) is required as a cofactor.

It carries out the reaction 2'-deoxyribonucleotide-(2'-deoxyribose 5'-phosphate)-2'-deoxyribonucleotide-DNA = a 3'-end 2'-deoxyribonucleotide-(2,3-dehydro-2,3-deoxyribose 5'-phosphate)-DNA + a 5'-end 5'-phospho-2'-deoxyribonucleoside-DNA + H(+). Functionally, involved in base excision repair of DNA damaged by oxidation or by mutagenic agents. Acts as a DNA glycosylase that recognizes and removes damaged bases. Has a preference for oxidized pyrimidines, such as thymine glycol, 5,6-dihydrouracil and 5,6-dihydrothymine. Has AP (apurinic/apyrimidinic) lyase activity and introduces nicks in the DNA strand. Cleaves the DNA backbone by beta-delta elimination to generate a single-strand break at the site of the removed base with both 3'- and 5'-phosphates. This chain is Endonuclease 8, found in Salmonella arizonae (strain ATCC BAA-731 / CDC346-86 / RSK2980).